The chain runs to 492 residues: GTPase-activating protein MSB4 (492 aa).

Residues 147–367 (GIPAEWRGNA…RIWDCLFYEE (221 aa)) enclose the Rab-GAP TBC domain.

Its subcellular location is the cytoplasm. The protein resides in the bud. It is found in the bud neck. Regulates exocytosis by functioning as a GAP for SEC4. Also required for efficient polarization of the actin patches. This Saccharomyces cerevisiae (strain ATCC 204508 / S288c) (Baker's yeast) protein is GTPase-activating protein MSB4 (MSB4).